Consider the following 224-residue polypeptide: Glutamate/aspartate import permease protein GltK (224 aa).

The Periplasmic portion of the chain corresponds to 1–19 (MYEFDWSSIVPSLPYLLDG). The chain crosses the membrane as a helical span at residues 20–40 (LVITLKITVTAVVIGILWGTM). The region spanning 20–216 (LVITLKITVT…VISLSASLLV (197 aa)) is the ABC transmembrane type-1 domain. At 41 to 67 (LAVMRLSSFAPVAWFAKAYVNVFRSIP) the chain is on the cytoplasmic side. Residues 68 to 88 (LVMVLLWFYLIVPGFLQNVLG) traverse the membrane as a helical segment. Topologically, residues 89–94 (LSPKND) are periplasmic. Residues 95 to 112 (IRLISAMVAFSMFEAAYY) form a helical membrane-spanning segment. The Cytoplasmic portion of the chain corresponds to 113-154 (SEIIRAGIQSISRGQSSAALALGMTHWQSMKLIILPQAFRAM). A helical transmembrane segment spans residues 155 to 175 (VPLLLTQGIVLFQDTSLVYVL). Residues 176-196 (SLADFFRTASTIGERDGTQVE) are Periplasmic-facing. Residues 197 to 217 (MILFAGFVYFVISLSASLLVS) form a helical membrane-spanning segment. Over 218-224 (YLKRRTA) the chain is Cytoplasmic.

This sequence belongs to the binding-protein-dependent transport system permease family. HisMQ subfamily. As to quaternary structure, the complex is composed of two ATP-binding proteins (GltL), two transmembrane proteins (GltJ and GltK) and a solute-binding protein (GltI).

Its subcellular location is the cell inner membrane. Its function is as follows. Part of the ABC transporter complex GltIJKL involved in glutamate and aspartate uptake. Probably responsible for the translocation of the substrate across the membrane. The sequence is that of Glutamate/aspartate import permease protein GltK (gltK) from Escherichia coli O157:H7.